The following is a 402-amino-acid chain: Septin CDC11 (402 aa).

At methionine 1 the chain carries N-acetylmethionine. The residue at position 4 (serine 4) is a Phosphoserine. The Basic motif motif lies at 14–21 (RKRKTLKK). A Septin-type G domain is found at 21–307 (KSINFSIMII…ENYRTEALSG (287 aa)). Residues 31–38 (GESGSGRS) are G1 motif. 31–38 (GESGSGRS) lines the GTP pocket. The segment at 89-92 (DTPN) is G3 motif. The segment at 171 to 174 (SKAD) is G4 motif. GTP-binding positions include 172–180 (KADSLTPKE) and glycine 233. Residues 318–376 (AKQEISESDYLMKEEQIKLEEERLRKFEERVHQDLINKRKELLERENELKEIEKRLLAE) adopt a coiled-coil conformation. Serine 394 is subject to Phosphoserine; by CDC28. Serine 395 carries the phosphoserine; by GIN4 modification.

This sequence belongs to the TRAFAC class TrmE-Era-EngA-EngB-Septin-like GTPase superfamily. Septin GTPase family. As to quaternary structure, component of the septin complex which consists of CDC3, CDC10, CDC11, CDC12 and probably SEP7. The purified septin complex appeared to have a stoichiometry of 2 CDC3, 1 to 2 CDC10, 1 CDC11, 2 CDC12, and 1 or none SEP7 subunit. Interacts with HSL1. In terms of processing, hyphal induction causes immediate phosphorylation at Ser-395 by GIN4 and at Ser-394 by CDC28-CCN1. GIN4 phosphorylation at Ser-395 primes CDC11 for further phosphorylation by CDC28-CCN1. CDC28-HGC1 then maintains CDC11 phosphorylation throughout hyphal growth. Ser-4 is also phosphorylated in yeast cells but not hyphal cells. Post-translationally, met-1 is acetylated.

It is found in the bud neck. Functionally, septins are GTPases involved in cytokinesis that assemble early in the cell cycle as a patch at the incipient bud site and form a ring before bud emergence, which transforms into an hour-glass shaped collar of cortical filaments that spans both sides of the mother-bud neck. This collar persists until just before cytokinesis, when it splits into two rings that occupy opposite sides of the neck. The septins at the bud neck serve as a structural scaffold that recruits different components involved in diverse processes at specific stages during the cell cycle. Many proteins bind asymmetrically to the septin collar. The septin assembly is regulated by protein kinase GIN4. Septins are also involved in cell morphogenesis, chlamydospores morphogenesis, bud site selection, chitin deposition, cell cycle regulation, cell compartmentalization, and spore wall formation. CDC11 is required for the correct localization of SEC3 at bud tips and bud necks. Plays a key role in invasive growth and virulence. This chain is Septin CDC11 (CDC11), found in Candida albicans (strain SC5314 / ATCC MYA-2876) (Yeast).